We begin with the raw amino-acid sequence, 451 residues long: Serine/threonine-protein phosphatase 2A 55 kDa regulatory subunit B delta isoform (451 aa).

WD repeat units lie at residues 30-69, 95-136, 179-217, 228-268, 287-325, 342-383, and 418-451; these read AEADIISTVEFNYSGDLLATGDKGGRVVIFQREQENKSRP, EIEE…KRAE, AHTYHINSISVNSDHETYLSADDLRINLWHLEITDRSFN, ELTE…LCDR, EIISSISDVKFSHSGRYMMTRDYLSVKVWDLNMENRPVE, ENDC…DITL, and DFNKKILHTAWHPMENIIAVAATNNLYIFQDKIN.

Belongs to the phosphatase 2A regulatory subunit B family. As to quaternary structure, PP2A consists of a common heterodimeric core enzyme, composed of a 36 kDa catalytic subunit (subunit C) and a 65 kDa constant regulatory subunit (PR65 or subunit A), that associates with a variety of regulatory subunits.

Its subcellular location is the cytoplasm. Its function is as follows. Substrate-recognition subunit of protein phosphatase 2A (PP2A) that plays a key role in cell cycle by controlling mitosis entry and exit. The activity of PP2A complexes containing PPP2R2D (PR55-delta) fluctuate during the cell cycle: the activity is high in interphase and low in mitosis. The protein is Serine/threonine-protein phosphatase 2A 55 kDa regulatory subunit B delta isoform (PPP2R2D) of Gallus gallus (Chicken).